The following is a 666-amino-acid chain: Protein scarlet (666 aa).

The Cytoplasmic segment spans residues 1-417 (MSDSDSKRID…TIQWLRFIQK (417 aa)). The disordered stretch occupies residues 26–55 (PVGSTIEVPSLDSTPKLSKRNSSERSLPLR). The 248-residue stretch at 69–316 (LVWRDLCVYT…FANHGYYCPE (248 aa)) folds into the ABC transporter domain. Residue 108–115 (GSSGSGKT) participates in ATP binding. Residues 418 to 438 (IAMAFIIGACFAGTTEPSQLG) traverse the membrane as a helical segment. The Extracellular segment spans residues 439–444 (VQAVQG). Residues 445–465 (ALFIMISENTYHPMYSVLNLF) form a helical membrane-spanning segment. Topologically, residues 466 to 490 (PQGFPLFMRETRSGLYSTGQYYAAN) are cytoplasmic. Residues 491-511 (ILALLPGMIIEPLIFVIICYW) traverse the membrane as a helical segment. Topologically, residues 512-518 (LTGLRST) are extracellular. A helical transmembrane segment spans residues 519-539 (FYAFGVTAMCVVLVMNVATAC). The Cytoplasmic segment spans residues 540–551 (GCFFSTAFNSVP). Residues 552-572 (LAMAYLVPLDYIFMITSGIFI) form a helical membrane-spanning segment. Topologically, residues 573–639 (QVNSLPVAFW…YSFNESNVYR (67 aa)) are extracellular. Asparagine 607 and asparagine 633 each carry an N-linked (GlcNAc...) asparagine glycan. The helical transmembrane segment at 640–660 (NLLAMVGLYFGFHLLGYYCLW) threads the bilayer. Topologically, residues 661 to 666 (RRARKL) are cytoplasmic.

This sequence belongs to the ABC transporter superfamily. ABCG family. Eye pigment precursor importer (TC 3.A.1.204) subfamily. In terms of assembly, may form a heterodimer with w/white. Expressed in the eye, specifically in primary pigment cells, secondary pigment cells and retinula cells (at protein level).

Its subcellular location is the cytoplasmic vesicle membrane. It carries out the reaction L-kynurenine(out) + ATP + H2O = L-kynurenine(in) + ADP + phosphate + H(+). ATP-dependent transporter of the ATP-binding cassette (ABC) family which transports various molecules including bioamines, neurotransmitters and metabolic intermediates. In the eye and probably in association with w/white, required for the transport of the eye brown pigment precursors, kynurenine and probably tryptophan, into pigment cell granules. In Malpighian tubules and pupal eyes, involved in kynurenine transport. Probably in association with w/white, plays a role in zinc storage granule biogenesis in Malpighian tubule principal epithelial cells. In Drosophila melanogaster (Fruit fly), this protein is Protein scarlet.